Here is a 29-residue protein sequence, read N- to C-terminus: NADH dehydrogenase [ubiquinone] 1 beta subcomplex subunit 10 (29 aa).

Residues 1–29 (GRKKGVQFDEGAPDDFDPNNPYKKDVAFL) are disordered.

The protein belongs to the complex I NDUFB10 subunit family. Complex I is composed of about 45 different subunits.

The protein resides in the mitochondrion inner membrane. Accessory subunit of the mitochondrial membrane respiratory chain NADH dehydrogenase (Complex I), that is believed not to be involved in catalysis. Complex I functions in the transfer of electrons from NADH to the respiratory chain. The immediate electron acceptor for the enzyme is believed to be ubiquinone. The chain is NADH dehydrogenase [ubiquinone] 1 beta subcomplex subunit 10 from Solanum tuberosum (Potato).